A 124-amino-acid polypeptide reads, in one-letter code: Acidic phospholipase A2 (124 aa).

7 disulfides stabilise this stretch: Cys26–Cys117, Cys28–Cys44, Cys43–Cys97, Cys49–Cys124, Cys50–Cys90, Cys57–Cys83, and Cys77–Cys88. Ca(2+)-binding residues include Tyr27, Gly29, and Gly31. His47 is a catalytic residue. Asp48 contributes to the Ca(2+) binding site. Glu89 is an active-site residue.

The protein belongs to the phospholipase A2 family. Group II subfamily. D49 sub-subfamily. It depends on Ca(2+) as a cofactor. In terms of tissue distribution, expressed by the venom gland.

Its subcellular location is the secreted. It carries out the reaction a 1,2-diacyl-sn-glycero-3-phosphocholine + H2O = a 1-acyl-sn-glycero-3-phosphocholine + a fatty acid + H(+). Its function is as follows. Snake venom phospholipase A2 (PLA2) that inhibits collagen- and ADP-induced platelet aggregation. PLA2 catalyzes the calcium-dependent hydrolysis of the 2-acyl groups in 3-sn-phosphoglycerides. This is Acidic phospholipase A2 from Bothrops jararaca (Jararaca).